The sequence spans 261 residues: 4-hydroxy-tetrahydrodipicolinate reductase (261 aa).

9–14 is an NAD(+) binding site; it reads GCLGRM. Residue Arg-36 coordinates NADP(+). NAD(+)-binding positions include 97–99 and 118–121; these read GTT and SANM. The active-site Proton donor/acceptor is His-151. His-152 contacts (S)-2,3,4,5-tetrahydrodipicolinate. The active-site Proton donor is the Lys-155. 161 to 162 contributes to the (S)-2,3,4,5-tetrahydrodipicolinate binding site; it reads GT.

The protein belongs to the DapB family.

The protein resides in the cytoplasm. The enzyme catalyses (S)-2,3,4,5-tetrahydrodipicolinate + NAD(+) + H2O = (2S,4S)-4-hydroxy-2,3,4,5-tetrahydrodipicolinate + NADH + H(+). It catalyses the reaction (S)-2,3,4,5-tetrahydrodipicolinate + NADP(+) + H2O = (2S,4S)-4-hydroxy-2,3,4,5-tetrahydrodipicolinate + NADPH + H(+). It functions in the pathway amino-acid biosynthesis; L-lysine biosynthesis via DAP pathway; (S)-tetrahydrodipicolinate from L-aspartate: step 4/4. Functionally, catalyzes the conversion of 4-hydroxy-tetrahydrodipicolinate (HTPA) to tetrahydrodipicolinate. This chain is 4-hydroxy-tetrahydrodipicolinate reductase, found in Wolbachia pipientis wMel.